Reading from the N-terminus, the 185-residue chain is NAD(P)H-dependent FMN reductase PA1204 (185 aa).

FMN contacts are provided by residues 13–20 (SLRSGSYN) and 81–83 (YNY). 115–122 (SAGRFGTA) is an NAD(+) binding site.

Belongs to the SsuE family. In terms of assembly, homodimer. Requires FMN as cofactor.

Has NAD(P)H-dependent FMN reductase activity. The protein is NAD(P)H-dependent FMN reductase PA1204 of Pseudomonas aeruginosa (strain ATCC 15692 / DSM 22644 / CIP 104116 / JCM 14847 / LMG 12228 / 1C / PRS 101 / PAO1).